Reading from the N-terminus, the 59-residue chain is MAVQQNRKTPSKRGMRRSHDALSGPALSVEPQTGETHRRHHVSPDGYYRGRKVMQGRED.

The segment at 1 to 59 is disordered; sequence MAVQQNRKTPSKRGMRRSHDALSGPALSVEPQTGETHRRHHVSPDGYYRGRKVMQGRED. Basic residues predominate over residues 49 to 59; the sequence is RGRKVMQGRED.

It belongs to the bacterial ribosomal protein bL32 family.

The protein is Large ribosomal subunit protein bL32 of Alkalilimnicola ehrlichii (strain ATCC BAA-1101 / DSM 17681 / MLHE-1).